The following is a 337-amino-acid chain: Anthranilate phosphoribosyltransferase (337 aa).

5-phospho-alpha-D-ribose 1-diphosphate is bound by residues G82, 85–86 (GD), T90, 92–95 (NIST), 110–118 (KHGGRSVSS), and S122. G82 is an anthranilate binding site. S94 is a Mg(2+) binding site. Position 168 (R168) interacts with anthranilate. Mg(2+) is bound by residues D226 and E227.

Belongs to the anthranilate phosphoribosyltransferase family. As to quaternary structure, homodimer. Mg(2+) is required as a cofactor.

It carries out the reaction N-(5-phospho-beta-D-ribosyl)anthranilate + diphosphate = 5-phospho-alpha-D-ribose 1-diphosphate + anthranilate. It participates in amino-acid biosynthesis; L-tryptophan biosynthesis; L-tryptophan from chorismate: step 2/5. Functionally, catalyzes the transfer of the phosphoribosyl group of 5-phosphorylribose-1-pyrophosphate (PRPP) to anthranilate to yield N-(5'-phosphoribosyl)-anthranilate (PRA). This chain is Anthranilate phosphoribosyltransferase, found in Francisella tularensis subsp. novicida (strain U112).